We begin with the raw amino-acid sequence, 690 residues long: Translation initiation factor IF-2 (690 aa).

A tr-type G domain is found at 178-346 (PRPPVVTVMG…MILLVAEMNE (169 aa)). The tract at residues 187–194 (GHVDHGKT) is G1. A GTP-binding site is contributed by 187 to 194 (GHVDHGKT). Residues 212–216 (GITQS) form a G2 region. Residues 233-236 (DTPG) are G3. Residues 233 to 237 (DTPGH) and 287 to 290 (NKID) contribute to the GTP site. Residues 287–290 (NKID) form a G4 region. Positions 324–326 (SAR) are G5.

The protein belongs to the TRAFAC class translation factor GTPase superfamily. Classic translation factor GTPase family. IF-2 subfamily.

It localises to the cytoplasm. Functionally, one of the essential components for the initiation of protein synthesis. Protects formylmethionyl-tRNA from spontaneous hydrolysis and promotes its binding to the 30S ribosomal subunits. Also involved in the hydrolysis of GTP during the formation of the 70S ribosomal complex. This is Translation initiation factor IF-2 from Thermotoga sp. (strain RQ2).